The following is a 311-amino-acid chain: Aspartate carbamoyltransferase catalytic subunit (311 aa).

Carbamoyl phosphate is bound by residues R55 and T56. L-aspartate is bound at residue K85. Carbamoyl phosphate-binding residues include R106, H135, and Q138. Residues R168 and R230 each coordinate L-aspartate. 2 residues coordinate carbamoyl phosphate: L268 and P269.

This sequence belongs to the aspartate/ornithine carbamoyltransferase superfamily. ATCase family. As to quaternary structure, heterododecamer (2C3:3R2) of six catalytic PyrB chains organized as two trimers (C3), and six regulatory PyrI chains organized as three dimers (R2).

It carries out the reaction carbamoyl phosphate + L-aspartate = N-carbamoyl-L-aspartate + phosphate + H(+). Its pathway is pyrimidine metabolism; UMP biosynthesis via de novo pathway; (S)-dihydroorotate from bicarbonate: step 2/3. In terms of biological role, catalyzes the condensation of carbamoyl phosphate and aspartate to form carbamoyl aspartate and inorganic phosphate, the committed step in the de novo pyrimidine nucleotide biosynthesis pathway. The polypeptide is Aspartate carbamoyltransferase catalytic subunit (Buchnera aphidicola subsp. Schizaphis graminum (strain Sg)).